The chain runs to 244 residues: tRNA pseudouridine synthase A (244 aa).

The active-site Nucleophile is Asp-52. Substrate is bound at residue Tyr-110.

Belongs to the tRNA pseudouridine synthase TruA family. In terms of assembly, homodimer.

It carries out the reaction uridine(38/39/40) in tRNA = pseudouridine(38/39/40) in tRNA. Its function is as follows. Formation of pseudouridine at positions 38, 39 and 40 in the anticodon stem and loop of transfer RNAs. This is tRNA pseudouridine synthase A from Finegoldia magna (strain ATCC 29328 / DSM 20472 / WAL 2508) (Peptostreptococcus magnus).